Here is a 301-residue protein sequence, read N- to C-terminus: Protein FAM221A (301 aa).

Residues 235 to 271 (MHAPSTSSPQPLAGGNEVGPSTQLSSLRKPEEDDMAY) are disordered.

It belongs to the FAM221 family.

In Mus musculus (Mouse), this protein is Protein FAM221A (Fam221a).